Consider the following 808-residue polypeptide: Genome polyprotein (808 aa).

Residues 34–55 (TAEVGSHQPEPLKTSVDKPGSK) are disordered. Short sequence motifs ((L)YPX(n)L motif) lie at residues 146-150 (YPHGL) and 179-184 (YPVWEL).

It belongs to the picornaviridae polyprotein family. As to quaternary structure, homopentamer. Homooligomer. Interacts with capsid protein VP2. Interacts with capsid protein VP3. In terms of assembly, interacts with capsid protein VP1. Interacts with capsid protein VP3. As to quaternary structure, interacts with capsid protein VP1. Interacts with capsid protein VP2. Specific enzymatic cleavages by viral protease in vivo yield a variety of precursors and mature proteins. Polyprotein processing intermediates are produced, such as P1-2A which is a functional precursor of the structural proteins, VP0 which is a VP4-VP2 precursor, VP1-2A precursor, 3ABC precursor which is a stable and catalytically active precursor of 3A, 3B and 3C proteins, 3AB and 3CD precursors. The assembly signal 2A is removed from VP1-2A by a host protease, possibly host Cathepsin L. This cleavage occurs over a region of 3 amino-acids probably generating VP1 proteins with heterogeneous C-termini. In terms of processing, during virion maturation, immature virions are rendered infectious following cleavage of VP0 into VP4 and VP2. This maturation seems to be an autocatalytic event triggered by the presence of RNA in the capsid and is followed by a conformational change of the particle. Post-translationally, the assembly signal 2A is removed from VP1-2A by a host protease, possibly host Cathepsin L in naked virions. This cleavage does not occur in enveloped virions. This cleavage occurs over a region of 3 amino-acids probably generating VP1 proteins with heterogeneous C-termini. Unlike other picornaviruses, does not seem to be myristoylated.

The protein localises to the virion. The protein resides in the host endosome. It is found in the host multivesicular body. Functionally, capsid proteins VP1, VP2, and VP3 form a closed capsid enclosing the viral positive strand RNA genome. All these proteins contain a beta-sheet structure called beta-barrel jelly roll. Together they form an icosahedral capsid (T=3) composed of 60 copies of each VP1, VP2, and VP3, with a diameter of approximately 300 Angstroms. VP1 is situated at the 12 fivefold axes, whereas VP2 and VP3 are located at the quasi-sixfold axes. The naked capsid interacts with the host receptor HAVCR1 to provide virion attachment to and probably entry into the target cell. Its function is as follows. VP0 precursor is a component of the immature procapsids. Plays a role in the assembly of the 12 pentamers into an icosahedral structure. Has not been detected in mature virions, supposedly owing to its small size. In terms of biological role, precursor component of immature procapsids that corresponds to an extended form of the structural protein VP1. After maturation, possibly by the host Cathepsin L, the assembly signal 2A is cleaved to give rise to the mature VP1 protein. This is Genome polyprotein from Human hepatitis A virus genotype IIIA (isolate GA76) (HHAV).